The chain runs to 380 residues: Homoserine O-succinyltransferase (380 aa).

The AB hydrolase-1 domain maps to 51–362 (NAVLICHALS…SKHGHDAFLL (312 aa)). S157 serves as the catalytic Nucleophile. Substrate is bound at residue R227. Residues D324 and H357 contribute to the active site. D358 serves as a coordination point for substrate.

Belongs to the AB hydrolase superfamily. MetX family. As to quaternary structure, homodimer.

The protein resides in the cytoplasm. It catalyses the reaction L-homoserine + succinyl-CoA = O-succinyl-L-homoserine + CoA. Its pathway is amino-acid biosynthesis; L-methionine biosynthesis via de novo pathway; O-succinyl-L-homoserine from L-homoserine: step 1/1. Transfers a succinyl group from succinyl-CoA to L-homoserine, forming succinyl-L-homoserine. The polypeptide is Homoserine O-succinyltransferase (Cellvibrio japonicus (strain Ueda107) (Pseudomonas fluorescens subsp. cellulosa)).